The sequence spans 284 residues: Tropomyosin (284 aa).

A coiled-coil region spans residues 1-284 (MDSIKKKMMA…DTTFAELTSF (284 aa)). Positions 97–140 (EDFEQSSGRLTETSTKLDDASKAAEESERNRKTLETRSISDDER) are disordered. Polar residues predominate over residues 101–110 (QSSGRLTETS). Positions 111–140 (TKLDDASKAAEESERNRKTLETRSISDDER) are enriched in basic and acidic residues.

This sequence belongs to the tropomyosin family. In terms of assembly, homodimer.

Its function is as follows. Tropomyosin, in association with the troponin complex, plays a central role in the calcium dependent regulation of muscle contraction. The chain is Tropomyosin from Echinococcus multilocularis (Fox tapeworm).